The chain runs to 424 residues: MFS-type transporter opdF (424 aa).

The segment covering 1–10 has biased composition (basic and acidic residues); that stretch reads MSDTSLEKGN. Positions 1–23 are disordered; that stretch reads MSDTSLEKGNEGPTAEAPKVAPP. 5 consecutive transmembrane segments (helical) span residues 36–56, 102–122, 127–147, 160–180, and 187–207; these read VAGASVALFVSFGWVNCIALF, VPIAIGSFLHVFGLMMASLST, LMLSQSVVSGIGSSLIFTPAM, IVGGLTVAGSSLGGVVFPLMV, and VGFGWTMRICAFMILGLLVFA. N-linked (GlcNAc...) asparagine glycosylation is present at N208. 6 consecutive transmembrane segments (helical) span residues 239–259, 265–285, 299–319, 329–349, 364–384, and 391–411; these read LCVASFFMYWGIFIPFDYIVV, GMSTQMAWSLVPILNGASFFG, FNVMIVMTTLSAILVLALWLP, FAALFGITSGAIIGLGPVLIV, VLAFAAVGTLTSPPIGGAIAA, and TYTCVFSGVSFLIGTLGLAAL.

It belongs to the major facilitator superfamily. Monocarboxylate porter (TC 2.A.1.13) family.

It is found in the membrane. In terms of biological role, MFS-type transporter; part of the gene cluster that mediates the biosynthesis of oxopyrrolidines, polyketide-amino acid hybrid compounds with feature structures of tetramic acid. The sequence is that of MFS-type transporter opdF from Penicillium oxalicum (strain 114-2 / CGMCC 5302) (Penicillium decumbens).